A 118-amino-acid chain; its full sequence is Large ribosomal subunit protein bL20 (118 aa).

This sequence belongs to the bacterial ribosomal protein bL20 family.

In terms of biological role, binds directly to 23S ribosomal RNA and is necessary for the in vitro assembly process of the 50S ribosomal subunit. It is not involved in the protein synthesizing functions of that subunit. This is Large ribosomal subunit protein bL20 from Desulforamulus reducens (strain ATCC BAA-1160 / DSM 100696 / MI-1) (Desulfotomaculum reducens).